The sequence spans 477 residues: Tripartite motif-containing protein 72 (477 aa).

Residues Cys-14, Cys-17, Cys-29, His-31, Cys-34, Cys-37, Cys-53, Cys-56, Cys-86, His-89, Cys-97, Asp-100, Cys-105, Cys-108, His-114, and His-117 each contribute to the Zn(2+) site. Residues 14–57 (CPLCLQLFDAPVTAECGHSFCRACLGRVAGEPAADGTVLCPCCQ) form an RING-type zinc finger. The segment at 81-122 (VPQGHCEEHLDPLSIYCEQDRALVCGVCASLGSHRGHRLLPA) adopts a B box-type zinc-finger fold. A coiled-coil region spans residues 135-232 (QQKLQLQEAC…EKVLEEVADK (98 aa)). Cys-144 carries the S-nitrosocysteine modification. At Ser-255 the chain carries Phosphoserine. Residues 271–475 (DFKFQVWRKM…PLLLVGPEGA (205 aa)) enclose the B30.2/SPRY domain.

This sequence belongs to the TRIM/RBCC family. Homodimer. Homooligomer; disulfide-linked. Oligomerizes on the phospholipid membrane. Interacts with DYSF and CAV3. In terms of processing, disulfide bond formation at Cys-242 occurs in case of membrane damage that cause the entry of the oxidized milieu of the extracellular space, resulting in homooligomerization. S-nitrosylation at Cys-144 stabilizes TRIM72 and protects against oxidation-induced protein degradation and cell death.

Its subcellular location is the cell membrane. The protein resides in the sarcolemma. It is found in the cytoplasmic vesicle membrane. It carries out the reaction S-ubiquitinyl-[E2 ubiquitin-conjugating enzyme]-L-cysteine + [acceptor protein]-L-lysine = [E2 ubiquitin-conjugating enzyme]-L-cysteine + N(6)-ubiquitinyl-[acceptor protein]-L-lysine.. It functions in the pathway protein modification; protein ubiquitination. Its activity is regulated as follows. Specifically binds phosphatidylserine. The binding to phospholipids enhances ubiquitination activity. Muscle-specific E3 ubiquitin-protein ligase that plays a central role in cell membrane repair by nucleating the assembly of the repair machinery at injury sites. Its ubiquitination activity is mediated by E2 ubiquitin-conjugating enzymes UBE2D1, UBE2D2 and UBE2D3. Acts as a sensor of oxidation: upon membrane damage, entry of extracellular oxidative environment results in disulfide bond formation and homooligomerization at the injury site. This oligomerization acts as a nucleation site for recruitment of TRIM72-containing vesicles to the injury site, leading to membrane patch formation. Probably acts upstream of the Ca(2+)-dependent membrane resealing process. Required for transport of DYSF to sites of cell injury during repair patch formation. Regulates membrane budding and exocytosis. May be involved in the regulation of the mobility of KCNB1-containing endocytic vesicles. This Homo sapiens (Human) protein is Tripartite motif-containing protein 72.